Here is a 380-residue protein sequence, read N- to C-terminus: E3 ubiquitin-protein ligase RNF13 (380 aa).

Residues 1-34 (MLLSIGMLMLSATQVYTILTVQLFAFLNLLPVEA) form the signal peptide. Residues 35 to 182 (DILAYNFENA…VPEFSLPLEY (148 aa)) lie on the Lumenal side of the membrane. One can recognise a PA domain in the interval 65–160 (KGFLINSKPE…GESSANSLKD (96 aa)). Asn-88 carries an N-linked (GlcNAc...) asparagine glycan. The helical transmembrane segment at 183-203 (YLIPFLIIVGICLILIVIFMI) threads the bilayer. At 204-380 (TKFVQDRHRA…ERDYNIANTV (177 aa)) the chain is on the cytoplasmic side. Residues 240 to 282 (CAICLDEYEDGDKLRILPCSHAYHCKCVDPWLTKTKKTCPVCK) form an RING-type; atypical zinc finger. The segment at 285 to 380 (VVPSQGDSDS…ERDYNIANTV (96 aa)) is disordered. Composition is skewed to acidic residues over residues 292–304 (SDSD…EENE) and 339–356 (SDYE…AENE).

In terms of assembly, interacts with ERN1. Autoubiquitinated.

Its subcellular location is the endoplasmic reticulum membrane. The protein localises to the late endosome membrane. It is found in the lysosome membrane. The protein resides in the nucleus inner membrane. It catalyses the reaction S-ubiquitinyl-[E2 ubiquitin-conjugating enzyme]-L-cysteine + [acceptor protein]-L-lysine = [E2 ubiquitin-conjugating enzyme]-L-cysteine + N(6)-ubiquitinyl-[acceptor protein]-L-lysine.. It participates in protein modification; protein ubiquitination. Its function is as follows. E3 ubiquitin-protein ligase that regulates cell proliferation. Involved in apoptosis regulation. Mediates ER stress-induced activation of JNK signaling pathway and apoptosis by promoting ERN1 activation and splicing of XBP1 mRNA. Also involved in protein trafficking and localization. The protein is E3 ubiquitin-protein ligase RNF13 (RNF13) of Bos taurus (Bovine).